A 429-amino-acid chain; its full sequence is Ribosomal RNA small subunit methyltransferase B (429 aa).

S-adenosyl-L-methionine-binding positions include 254-260 (CAAPGGK), Asp-277, Asp-303, and Asp-322. Residue Cys-375 is the Nucleophile of the active site.

Belongs to the class I-like SAM-binding methyltransferase superfamily. RsmB/NOP family.

The protein localises to the cytoplasm. The enzyme catalyses cytidine(967) in 16S rRNA + S-adenosyl-L-methionine = 5-methylcytidine(967) in 16S rRNA + S-adenosyl-L-homocysteine + H(+). Functionally, specifically methylates the cytosine at position 967 (m5C967) of 16S rRNA. The polypeptide is Ribosomal RNA small subunit methyltransferase B (Shigella sonnei (strain Ss046)).